Reading from the N-terminus, the 336-residue chain is 3-isopropylmalate dehydrogenase (336 aa).

Substrate-binding residues include Arg87, Arg97, Arg121, and Asp211. Residues Asp211, Asp235, and Asp239 each contribute to the Mg(2+) site. 271–283 (GSAPDIAGQGIAD) is a binding site for NAD(+).

It belongs to the isocitrate and isopropylmalate dehydrogenases family. LeuB type 2 subfamily. As to quaternary structure, homodimer. It depends on Mg(2+) as a cofactor. Mn(2+) is required as a cofactor.

The protein localises to the cytoplasm. The enzyme catalyses (2R,3S)-3-isopropylmalate + NAD(+) = 4-methyl-2-oxopentanoate + CO2 + NADH. Its pathway is amino-acid biosynthesis; L-leucine biosynthesis; L-leucine from 3-methyl-2-oxobutanoate: step 3/4. Its function is as follows. Catalyzes the oxidation of 3-carboxy-2-hydroxy-4-methylpentanoate (3-isopropylmalate) to 3-carboxy-4-methyl-2-oxopentanoate. The product decarboxylates to 4-methyl-2 oxopentanoate. In Mycolicibacterium gilvum (strain PYR-GCK) (Mycobacterium gilvum (strain PYR-GCK)), this protein is 3-isopropylmalate dehydrogenase.